Reading from the N-terminus, the 551-residue chain is MYRLLSSVTARAAATAGPAWDGGRRGAHRRPGLPVLGLGWAGGLGLGLGLALGAKLVVGLRGAVPIQSPADPEASGTTELSHEQALSPGSPHTPAPPAARGFSRAIESSRDLLHRIKDEVGAPGIVVGVSVDGKEVWSEGLGYADVENRVPCKPETVMRIASISKSLTMVALAKLWEAGKLDLDLPVQHYVPEFPEKEYEGEKVSVTTRLLISHLSGIRHYEKDIKKVKEEKAYKALKMVKGTPPPSDQEKELKEKGGKNNEKSDAPKAKVEQDSEARCRSAKPGKKKNDFEQGELYLKEKFENSIESLRLFKNDPLFFKPGSQFLYSTFGYTLLAAIVERASGYKYLDYMQKIFHDLDMLTTVQEENEPVIYNRARFYVYNKKKRLVNTPYVDNSYKWAGGGFLSTVGDLLKFGNAMLYGYQVGQFKNSNENLLPGYLKPETMVMMWTPVPNTEMSWDKEGKYAMAWGVVEKKQTYGSCRKQRHYASHTGGAVGASSVLLVLPEELDSEAVNNKVPPRGIIVSIICNMQSVGLNSTALKIALEFDKDRAD.

The transit peptide at 1-113 (MYRLLSSVTA…RAIESSRDLL (113 aa)) directs the protein to the mitochondrion. Residues 69-101 (PADPEASGTTELSHEQALSPGSPHTPAPPAARG) are disordered. Ser162 functions as the Acyl-ester intermediate in the catalytic mechanism. Positions 237-287 (LKMVKGTPPPSDQEKELKEKGGKNNEKSDAPKAKVEQDSEARCRSAKPGKK) are disordered. The segment covering 248–279 (DQEKELKEKGGKNNEKSDAPKAKVEQDSEARC) has biased composition (basic and acidic residues). Residues Lys287 and Lys288 each carry the N6-succinyllysine modification. Lys301 and Lys346 each carry N6-acetyllysine.

Belongs to the peptidase S12 family. Expressed predominantly in liver.

The protein resides in the mitochondrion. Functionally, mitochondrial serine protease that acts as a regulator of mitochondrial lipid metabolism. Acts by decreasing protein levels of PISD, a mitochondrial enzyme that converts phosphatidylserine (PtdSer) to phosphatidylethanolamine (PtdEtn), thereby affecting mitochondrial lipid metabolism. It is unclear whether it acts directly by mediating proteolysis of PISD or by mediating proteolysis of another lipid metabolism protein. Acts as a tumor suppressor that has the ability to inhibit proliferation of multiple types of cancer cells: probably by promoting decreased levels of PISD, thereby affecting mitochondrial lipid metabolism. This is Serine beta-lactamase-like protein LACTB, mitochondrial from Mus musculus (Mouse).